The following is a 167-amino-acid chain: Small heat shock protein C1 (167 aa).

Positions 59–167 (PLYESNSIKS…EQDAREITIN (109 aa)) constitute a sHSP domain.

This sequence belongs to the small heat shock protein (HSP20) family.

This is Small heat shock protein C1 (hspC1) from Rickettsia felis (strain ATCC VR-1525 / URRWXCal2) (Rickettsia azadi).